The primary structure comprises 66 residues: Beta-mammal toxin Css2 (66 aa).

Residues 1–66 (KEGYLVSKST…VWPLPNKTCN (66 aa)) enclose the LCN-type CS-alpha/beta domain. Disulfide bonds link Cys12/Cys65, Cys16/Cys41, Cys25/Cys46, and Cys29/Cys48. An Asparagine amide modification is found at Asn66.

This sequence belongs to the long (4 C-C) scorpion toxin superfamily. Sodium channel inhibitor family. Beta subfamily. Post-translationally, C-terminal amidation increases its affinity for sodium channels. Expressed by the venom gland.

The protein resides in the secreted. Its function is as follows. Beta toxin that binds site-4 of sodium channels (Nav) and reduces peak current (observed on Nav1.6/SCN8A (IC(50)=307 nM)), shifts the voltage of activation toward more negative potentials (observed on Nav1.6, Nav1.1 (weak), Nav1.2 (weak), and Nav1.7 (weak)), and induces resurgent currents at negative voltages following brief and strong depolarizations (observed on Nav1.6, Nav1.1 (weak), and Nav1.7 (weak)). A reduction of peak current of Nav1.5/SCN7A has been observed in another study (IC(50)=35-40 nM). This toxin is only active on mammals. It has been shown to bind phospholipids. The chain is Beta-mammal toxin Css2 from Centruroides suffusus (Durango bark scorpion).